The following is a 182-amino-acid chain: ATP-dependent protease subunit HslV (182 aa).

T7 is an active-site residue. Residues G162, C165, and T168 each coordinate Na(+).

This sequence belongs to the peptidase T1B family. HslV subfamily. As to quaternary structure, a double ring-shaped homohexamer of HslV is capped on each side by a ring-shaped HslU homohexamer. The assembly of the HslU/HslV complex is dependent on binding of ATP.

The protein localises to the cytoplasm. The catalysed reaction is ATP-dependent cleavage of peptide bonds with broad specificity.. With respect to regulation, allosterically activated by HslU binding. Functionally, protease subunit of a proteasome-like degradation complex believed to be a general protein degrading machinery. The chain is ATP-dependent protease subunit HslV from Legionella pneumophila (strain Lens).